The following is a 322-amino-acid chain: DNA primase small subunit PriS (322 aa).

Residues Asp-100, Asp-102, and Asp-228 contribute to the active site.

It belongs to the eukaryotic-type primase small subunit family. Heterodimer of a small subunit (PriS) and a large subunit (PriL). Requires Mg(2+) as cofactor. Mn(2+) serves as cofactor.

In terms of biological role, catalytic subunit of DNA primase, an RNA polymerase that catalyzes the synthesis of short RNA molecules used as primers for DNA polymerase during DNA replication. The small subunit contains the primase catalytic core and has DNA synthesis activity on its own. Binding to the large subunit stabilizes and modulates the activity, increasing the rate of DNA synthesis while decreasing the length of the DNA fragments, and conferring RNA synthesis capability. The DNA polymerase activity may enable DNA primase to also catalyze primer extension after primer synthesis. May also play a role in DNA repair. The protein is DNA primase small subunit PriS of Sulfolobus acidocaldarius (strain ATCC 33909 / DSM 639 / JCM 8929 / NBRC 15157 / NCIMB 11770).